The primary structure comprises 310 residues: Zinc finger CCCH domain-containing protein 14 (310 aa).

Residues 56 to 75 are disordered; that stretch reads ESLSPSPPSSSSPPSRVDTT. Residues 84–129 are a coiled coil; it reads KLILEYDELNEHYELCLNRLQSLMTELDSLRHENDSLRFENSDLLK. Over residues 155–167 the composition is skewed to basic and acidic residues; it reads QISDSRSAKRNNQ. The disordered stretch occupies residues 155-174; sequence QISDSRSAKRNNQERNSLPK. C3H1-type zinc fingers lie at residues 232–260 and 270–298; these read MMKTELCNKWQETGACCYGDNCQFAHGID and RYKTEVCRMMVTGAMCPYGHRCHFRHSLT.

In terms of tissue distribution, highly expressed in secondary cell wall-forming tissues and the xylem cells of roots. Expressed predominantly in inflorescence stems, flowers and siliques. Highly expressed in the basal portion of stems, where cells are undergoing secondary cell wall thickening.

Functionally, functions probably as a transcriptional factor that activates genes involved in secondary cell wall biosynthesis. May play a role in both transcriptional and post-transcriptional regulation. Binds to ssDNA, dsDNA, and ribohomopolymers in vitro. Maybe involved in post-transcriptional regulation of its target genes. Targets RNA of a polygalacturonase, a well-known cell wall modifying gene. Functions redudantly with C3H15 to regulate secondary cell wall formation. C3H14 and C3H15 have overlapping roles in the regulation of secondary cell wall formation and anther development. C3H14 may contribute more to secondary cell wall thickening while C3H15 could be more important in anther development. May regulate at both the transcriptional and post-transcriptional levels the expression of many genes involved in various biological processes, particularly those associated with cell wall metabolism and pollen development. The chain is Zinc finger CCCH domain-containing protein 14 from Arabidopsis thaliana (Mouse-ear cress).